Consider the following 1333-residue polypeptide: Inner capsid protein VP1 (1333 aa).

Residues 1-10 (MHSTTNNSNK) show a composition bias toward polar residues. Residues 1 to 93 (MHSTTNNSNK…MDMEKAAETT (93 aa)) are disordered. A compositionally biased stretch (basic and acidic residues) spans 11–20 (RNNEEKHKQP). Positions 64 to 82 (DGASRSGTNAKVATASSAR) are enriched in polar residues.

The protein belongs to the turreted BTV-fold inner capsid family. As to quaternary structure, homodecamer; each decamer is made up of two conformers of VP2, called VP2A and VP2B. 12 homodecamers assemble to form an icosahedral capsid.

Its subcellular location is the virion. Functionally, inner capsid protein that self-assembles to form an icosahedral capsid with a T=2 symmetry, which consists of 120 copies of VP2, with channels at each of its five-fold vertices. This capsid constitutes the innermost concentric layer of the viral mature particle. In Lymantria dispar cypovirus 1 (isolate Rao) (LdCPV-1), this protein is Inner capsid protein VP1 (S1).